The following is a 91-amino-acid chain: Elongation factor 1-beta (91 aa).

Belongs to the EF-1-beta/EF-1-delta family.

Promotes the exchange of GDP for GTP in EF-1-alpha/GDP, thus allowing the regeneration of EF-1-alpha/GTP that could then be used to form the ternary complex EF-1-alpha/GTP/AAtRNA. This chain is Elongation factor 1-beta, found in Metallosphaera sedula (strain ATCC 51363 / DSM 5348 / JCM 9185 / NBRC 15509 / TH2).